A 180-amino-acid chain; its full sequence is Putative manganese efflux pump MntP (180 aa).

6 helical membrane passes run 4-24 (FVTICIMAAALGMDAFSVALG), 40-60 (LTIGLFHVAMPLAGMAVGKWL), 64-84 (FDVIATYIGGGLLLVIGVQMA), 103-123 (LLLFAVGVSLDSFSAGLSFGI), 129-149 (FVTVGMIGAMSMVMSWIGLIV), and 156-176 (FLGAYGELLGGLVLIGFGLKI).

Belongs to the MntP (TC 9.B.29) family.

It is found in the cell membrane. In terms of biological role, probably functions as a manganese efflux pump. The chain is Putative manganese efflux pump MntP from Shouchella clausii (strain KSM-K16) (Alkalihalobacillus clausii).